Reading from the N-terminus, the 157-residue chain is MQCPSCQNTDSRVLESRSADTGKSVRRRRECLNCDFRFTTYERVETVPITVIKRSESKETFSRSKLLNGLIRACEKTCIDNQKIESIVDEIEIQLQQRNMKEVSSSDLGEMVLGQLKGLSEVAYIRFASVYRQFNGINDFVETLETFKPDKKLATVI.

Residues 1 to 11 are compositionally biased toward polar residues; that stretch reads MQCPSCQNTDS. A disordered region spans residues 1–21; the sequence is MQCPSCQNTDSRVLESRSADT. A zinc finger spans residues 3–34; sequence CPSCQNTDSRVLESRSADTGKSVRRRRECLNC. One can recognise an ATP-cone domain in the interval 49–139; it reads ITVIKRSESK…VYRQFNGIND (91 aa).

Belongs to the NrdR family. The cofactor is Zn(2+).

Its function is as follows. Negatively regulates transcription of bacterial ribonucleotide reductase nrd genes and operons by binding to NrdR-boxes. The polypeptide is Transcriptional repressor NrdR (Prochlorococcus marinus (strain MIT 9211)).